Consider the following 158-residue polypeptide: 2-C-methyl-D-erythritol 2,4-cyclodiphosphate synthase (158 aa).

2 residues coordinate a divalent metal cation: D9 and H11. Residues 9 to 11 and 35 to 36 contribute to the 4-CDP-2-C-methyl-D-erythritol 2-phosphate site; these read DVH and HS. H43 serves as a coordination point for a divalent metal cation. 4-CDP-2-C-methyl-D-erythritol 2-phosphate contacts are provided by residues 57–59 and R143; that span reads DIG.

This sequence belongs to the IspF family. In terms of assembly, homotrimer. Requires a divalent metal cation as cofactor.

It carries out the reaction 4-CDP-2-C-methyl-D-erythritol 2-phosphate = 2-C-methyl-D-erythritol 2,4-cyclic diphosphate + CMP. The protein operates within isoprenoid biosynthesis; isopentenyl diphosphate biosynthesis via DXP pathway; isopentenyl diphosphate from 1-deoxy-D-xylulose 5-phosphate: step 4/6. In terms of biological role, involved in the biosynthesis of isopentenyl diphosphate (IPP) and dimethylallyl diphosphate (DMAPP), two major building blocks of isoprenoid compounds. Catalyzes the conversion of 4-diphosphocytidyl-2-C-methyl-D-erythritol 2-phosphate (CDP-ME2P) to 2-C-methyl-D-erythritol 2,4-cyclodiphosphate (ME-CPP) with a corresponding release of cytidine 5-monophosphate (CMP). In Chromobacterium violaceum (strain ATCC 12472 / DSM 30191 / JCM 1249 / CCUG 213 / NBRC 12614 / NCIMB 9131 / NCTC 9757 / MK), this protein is 2-C-methyl-D-erythritol 2,4-cyclodiphosphate synthase.